The primary structure comprises 193 residues: UPF0314 protein Pden_1914 (193 aa).

A run of 4 helical transmembrane segments spans residues 13–33 (APYW…LWIG), 62–82 (WYTP…WLVA), 148–168 (LPVW…TWLI), and 172–192 (LALN…WQAA).

It belongs to the UPF0314 family.

The protein localises to the cell membrane. This Paracoccus denitrificans (strain Pd 1222) protein is UPF0314 protein Pden_1914.